The chain runs to 155 residues: Gastrin-releasing peptide (155 aa).

A signal peptide spans 1-31 (MEGVLLFWKYRALFFLVLCSLVLCKVHLSQA). At methionine 60 the chain carries Methionine amide. The propeptide occupies 128–155 (FSGAEDNNLKEMLDYLYQMMNMKENTSS).

It belongs to the bombesin/neuromedin-B/ranatensin family. As to expression, brain and stomach. In the stomach GRP was localized, at the base of the gastric pits, to occasional cells whose distribution and appearance were consistent with that of gut neuroendocrine cells.

The protein resides in the secreted. It localises to the cytoplasmic vesicle. Its subcellular location is the secretory vesicle lumen. Stimulates the release of gastrin and other gastrointestinal hormones. This is Gastrin-releasing peptide (grp) from Bombina orientalis (Oriental fire-bellied toad).